Consider the following 475-residue polypeptide: Phenolic acid decarboxylase (475 aa).

Positions 161, 183, and 225 each coordinate Mn(2+). Residues 161 to 166 (NVGIYR) and 182 to 183 (MH) contribute to the prenylated FMN site. Glu-274 serves as the catalytic Proton donor.

Belongs to the UbiD family. YclC subfamily. The cofactor is prenylated FMN. It depends on Mn(2+) as a cofactor.

It catalyses the reaction 4-hydroxybenzoate + H(+) = phenol + CO2. It carries out the reaction vanillate + H(+) = guaiacol + CO2. Functionally, involved in the non-oxidative decarboxylation and detoxification of phenolic derivatives under both aerobic and anaerobic conditions. Phenolic acid decarboxylase that catalyzes the reversible decarboxylation of 4-hydroxybenzoate and vanillate. The chain is Phenolic acid decarboxylase from Escherichia coli O157:H7.